The primary structure comprises 64 residues: MAKVCEICGKGPITGNNVSHAHNKTRRRWLPNLKKVRMVTASGATVRGKVCTRCIRSGAVVKPA.

The protein belongs to the bacterial ribosomal protein bL28 family.

The sequence is that of Large ribosomal subunit protein bL28 from Desulfotalea psychrophila (strain LSv54 / DSM 12343).